The sequence spans 932 residues: DNA mismatch repair protein MutS (932 aa).

615–622 (GPNMAGKS) is a binding site for ATP.

This sequence belongs to the DNA mismatch repair MutS family.

Functionally, this protein is involved in the repair of mismatches in DNA. It is possible that it carries out the mismatch recognition step. This protein has a weak ATPase activity. The chain is DNA mismatch repair protein MutS from Clostridium botulinum (strain Kyoto / Type A2).